Here is a 475-residue protein sequence, read N- to C-terminus: tRNA modification GTPase MnmE (475 aa).

3 residues coordinate (6S)-5-formyl-5,6,7,8-tetrahydrofolate: R24, E81, and K124. Residues 220–397 (GLSVVLAGQP…LRKELLRLVG (178 aa)) form the TrmE-type G domain. N230 is a binding site for K(+). GTP is bound by residues 230-235 (NVGKSS), 249-255 (TPIAGTT), 274-277 (DTAG), and 378-380 (SAR). S234 serves as a coordination point for Mg(2+). Positions 249, 251, and 254 each coordinate K(+). T255 is a binding site for Mg(2+). K475 contributes to the (6S)-5-formyl-5,6,7,8-tetrahydrofolate binding site.

The protein belongs to the TRAFAC class TrmE-Era-EngA-EngB-Septin-like GTPase superfamily. TrmE GTPase family. In terms of assembly, homodimer. Heterotetramer of two MnmE and two MnmG subunits. K(+) serves as cofactor.

It localises to the cytoplasm. Its function is as follows. Exhibits a very high intrinsic GTPase hydrolysis rate. Involved in the addition of a carboxymethylaminomethyl (cmnm) group at the wobble position (U34) of certain tRNAs, forming tRNA-cmnm(5)s(2)U34. The chain is tRNA modification GTPase MnmE from Cupriavidus pinatubonensis (strain JMP 134 / LMG 1197) (Cupriavidus necator (strain JMP 134)).